The primary structure comprises 207 residues: Microtubule-associated protein Jupiter (207 aa).

Serine 30 bears the Phosphoserine mark. Phosphothreonine is present on residues threonine 41 and threonine 102. Phosphoserine is present on residues serine 111, serine 138, and serine 149. 2 disordered regions span residues lysine 129–glycine 174 and glycine 188–tryptophan 207. Low complexity predominate over residues serine 136–serine 149. Positions threonine 150–asparagine 164 are enriched in polar residues.

The protein belongs to the MAP Jupiter family.

Its subcellular location is the nucleus. It localises to the cytoplasm. The protein localises to the cytoskeleton. The protein resides in the spindle. In terms of biological role, binds to all microtubule populations. This Drosophila grimshawi (Hawaiian fruit fly) protein is Microtubule-associated protein Jupiter.